The primary structure comprises 268 residues: F-actin-capping protein subunit beta (268 aa).

Belongs to the F-actin-capping protein beta subunit family. Component of the F-actin capping complex, composed of a heterodimer of an alpha and a beta subunit.

It localises to the cytoplasm. It is found in the cytoskeleton. Its subcellular location is the actin patch. The protein resides in the nucleus. F-actin-capping proteins bind in a Ca(2+)-independent manner to the fast growing ends of actin filaments (barbed end) thereby blocking the exchange of subunits at these ends. Unlike other capping proteins (such as gelsolin and severin), these proteins do not sever actin filaments. Competes with formin cdc12 for attachment to the actin filaments barbed ends. Slowly replaces cdc12 on the barbed ends in preparation for filament disassembly during contractile ring constriction. The polypeptide is F-actin-capping protein subunit beta (acp2) (Schizosaccharomyces pombe (strain 972 / ATCC 24843) (Fission yeast)).